The sequence spans 260 residues: Acetylglutamate kinase (260 aa).

Substrate-binding positions include 41-42 (GG), R63, and N157.

This sequence belongs to the acetylglutamate kinase family. ArgB subfamily.

The protein localises to the cytoplasm. The enzyme catalyses N-acetyl-L-glutamate + ATP = N-acetyl-L-glutamyl 5-phosphate + ADP. It functions in the pathway amino-acid biosynthesis; L-arginine biosynthesis; N(2)-acetyl-L-ornithine from L-glutamate: step 2/4. Functionally, catalyzes the ATP-dependent phosphorylation of N-acetyl-L-glutamate. This Acidobacterium capsulatum (strain ATCC 51196 / DSM 11244 / BCRC 80197 / JCM 7670 / NBRC 15755 / NCIMB 13165 / 161) protein is Acetylglutamate kinase.